Consider the following 343-residue polypeptide: MSAFTPASEVLLRHSDDFEQSRILFAGDLQDDLPARLDTATSRAHTQQFHHWQVLSRQMGDNARFSLVATADDVADCDTLIYYWPKNKPEAQFQLMNLLSLLPVGTDIFVVGENRSGVRSAEQMLADYAPLNKVDSARRCGLYFGRLEKQPVFDANKFWGEYSVDGLTVKTLPGVFSRDGLDVGSQLLLSTLTPHTKGKVLDVGCGAGVLSVAFARHSPKIRLTLCDVSAPAVEASRATLATNGVEGEVFASNVFSEVKGRFDMIISNPPFHDGMQTSLDAAQTLIRGAVRHLNSGGELRIVANAFLPYPDVLDETFGFHEVIAQTGRFKVYRAIMTRQAKKG.

The protein belongs to the methyltransferase superfamily. RsmC family. As to quaternary structure, monomer.

It localises to the cytoplasm. The enzyme catalyses guanosine(1207) in 16S rRNA + S-adenosyl-L-methionine = N(2)-methylguanosine(1207) in 16S rRNA + S-adenosyl-L-homocysteine + H(+). Specifically methylates the guanine in position 1207 of 16S rRNA in the 30S particle. This is Ribosomal RNA small subunit methyltransferase C from Escherichia coli O6:K15:H31 (strain 536 / UPEC).